Reading from the N-terminus, the 604-residue chain is Elongation factor 4 (604 aa).

Positions 7 to 189 (KNIRNFCIIA…QIVTKIPAPS (183 aa)) constitute a tr-type G domain. GTP-binding positions include 19-24 (DHGKST) and 136-139 (NKID).

This sequence belongs to the TRAFAC class translation factor GTPase superfamily. Classic translation factor GTPase family. LepA subfamily.

It localises to the cell membrane. The enzyme catalyses GTP + H2O = GDP + phosphate + H(+). In terms of biological role, required for accurate and efficient protein synthesis under certain stress conditions. May act as a fidelity factor of the translation reaction, by catalyzing a one-codon backward translocation of tRNAs on improperly translocated ribosomes. Back-translocation proceeds from a post-translocation (POST) complex to a pre-translocation (PRE) complex, thus giving elongation factor G a second chance to translocate the tRNAs correctly. Binds to ribosomes in a GTP-dependent manner. In Lachnospira eligens (strain ATCC 27750 / DSM 3376 / VPI C15-48 / C15-B4) (Eubacterium eligens), this protein is Elongation factor 4.